We begin with the raw amino-acid sequence, 352 residues long: Neutral protease 2 homolog ATEG_04941 (352 aa).

The N-terminal stretch at 1-19 is a signal peptide; sequence MRFTALATAILPLACNVLA. Positions 20–175 are excised as a propeptide; sequence LPAKTGEAPK…ASAVKPLDKR (156 aa). 2 disulfides stabilise this stretch: cysteine 181/cysteine 253 and cysteine 260/cysteine 278. A Zn(2+)-binding site is contributed by histidine 303. Glutamate 304 is an active-site residue. Zn(2+) contacts are provided by histidine 307 and aspartate 318.

Belongs to the peptidase M35 family. Zn(2+) is required as a cofactor.

Its subcellular location is the secreted. The catalysed reaction is Preferential cleavage of bonds with hydrophobic residues in P1'. Also 3-Asn-|-Gln-4 and 8-Gly-|-Ser-9 bonds in insulin B chain.. Functionally, secreted metalloproteinase that allows assimilation of proteinaceous substrates. Shows high activities on basic nuclear substrates such as histone and protamine. The polypeptide is Neutral protease 2 homolog ATEG_04941 (Aspergillus terreus (strain NIH 2624 / FGSC A1156)).